The primary structure comprises 336 residues: Fimbrial adhesin PapGII (336 aa).

Residues 1-20 (MKKWFPALLFSLCVSGESSA) form the signal peptide. Cystine bridges form between cysteine 64/cysteine 138 and cysteine 217/cysteine 249. Residues glutamate 79 and 124-127 (GYKW) each bind D-galactose.

It belongs to the adhesin PapG family.

The protein resides in the secreted. The protein localises to the fimbrium. Tip adhesin component of type P pili that plays a critical role in kidney infection through targeted interaction with the globoseries glycolipids containing the Gal-alpha(1-4)-Gal disaccharide present on uroepithelial cells. In turn, transcriptionally regulates host gene expression in kidney cells, leading to inflammatory pathway activation and renal tissue damage. Acts thereby as key determinant of invasive uropathogenic E.coli (UPEC), which cause pyelonephritis and urinary-source bacteremia. This chain is Fimbrial adhesin PapGII, found in Escherichia coli.